The sequence spans 125 residues: Large ribosomal subunit protein eL31 (125 aa).

The residue at position 1 (M1) is an N-acetylmethionine. S15 is subject to Phosphoserine. 2 positions are modified to N6-succinyllysine: K55 and K70. The residue at position 75 (K75) is an N6-acetyllysine; alternate. K75 bears the N6-succinyllysine; alternate mark. S98 carries the phosphoserine modification.

The protein belongs to the eukaryotic ribosomal protein eL31 family. Component of the large ribosomal subunit.

It is found in the cytoplasm. Component of the large ribosomal subunit. The ribosome is a large ribonucleoprotein complex responsible for the synthesis of proteins in the cell. The polypeptide is Large ribosomal subunit protein eL31 (RPL31) (Pongo abelii (Sumatran orangutan)).